We begin with the raw amino-acid sequence, 151 residues long: Large ribosomal subunit protein bL9 (151 aa).

The protein belongs to the bacterial ribosomal protein bL9 family.

Its function is as follows. Binds to the 23S rRNA. This is Large ribosomal subunit protein bL9 from Lactobacillus acidophilus (strain ATCC 700396 / NCK56 / N2 / NCFM).